Consider the following 134-residue polypeptide: Small ribosomal subunit protein uS8 (134 aa).

Belongs to the universal ribosomal protein uS8 family. In terms of assembly, part of the 30S ribosomal subunit. Contacts proteins S5 and S12.

In terms of biological role, one of the primary rRNA binding proteins, it binds directly to 16S rRNA central domain where it helps coordinate assembly of the platform of the 30S subunit. This is Small ribosomal subunit protein uS8 from Thermosipho melanesiensis (strain DSM 12029 / CIP 104789 / BI429).